A 234-amino-acid polypeptide reads, in one-letter code: MRLVQLSRHSIAFPSPEGALREPNGLLALGGDLSPARLLMAYQHGIFPWFSPGDPILWWSPDPRAVLWPEEFHLSRSMKRFHNTSPYRVTLNYAFDRVIDGCTNHRDEGTWITRGIEEAYRRLHELGHAHSIEVWRDQELVGGMYGVSQGALFCGESMFSRKENASKTALLVFCAEFIHHGGKLIDCQVLNSHTASLGAIEIPRCDYLEHLSRLRQQPLVSRFWVPRTLFLPRK.

The protein belongs to the L/F-transferase family.

The protein resides in the cytoplasm. The enzyme catalyses N-terminal L-lysyl-[protein] + L-leucyl-tRNA(Leu) = N-terminal L-leucyl-L-lysyl-[protein] + tRNA(Leu) + H(+). The catalysed reaction is N-terminal L-arginyl-[protein] + L-leucyl-tRNA(Leu) = N-terminal L-leucyl-L-arginyl-[protein] + tRNA(Leu) + H(+). It carries out the reaction L-phenylalanyl-tRNA(Phe) + an N-terminal L-alpha-aminoacyl-[protein] = an N-terminal L-phenylalanyl-L-alpha-aminoacyl-[protein] + tRNA(Phe). In terms of biological role, functions in the N-end rule pathway of protein degradation where it conjugates Leu, Phe and, less efficiently, Met from aminoacyl-tRNAs to the N-termini of proteins containing an N-terminal arginine or lysine. This Salmonella arizonae (strain ATCC BAA-731 / CDC346-86 / RSK2980) protein is Leucyl/phenylalanyl-tRNA--protein transferase.